The primary structure comprises 370 residues: tRNA 2-selenouridine synthase (370 aa).

The Rhodanese domain occupies 12–136 (FLDDVPMMDM…MRTFLLETTQ (125 aa)). Catalysis depends on Cys-95, which acts as the S-selanylcysteine intermediate.

The protein belongs to the SelU family. Monomer.

It catalyses the reaction 5-methylaminomethyl-2-thiouridine(34) in tRNA + selenophosphate + (2E)-geranyl diphosphate + H2O + H(+) = 5-methylaminomethyl-2-selenouridine(34) in tRNA + (2E)-thiogeraniol + phosphate + diphosphate. It carries out the reaction 5-methylaminomethyl-2-thiouridine(34) in tRNA + (2E)-geranyl diphosphate = 5-methylaminomethyl-S-(2E)-geranyl-thiouridine(34) in tRNA + diphosphate. The catalysed reaction is 5-methylaminomethyl-S-(2E)-geranyl-thiouridine(34) in tRNA + selenophosphate + H(+) = 5-methylaminomethyl-2-(Se-phospho)selenouridine(34) in tRNA + (2E)-thiogeraniol. The enzyme catalyses 5-methylaminomethyl-2-(Se-phospho)selenouridine(34) in tRNA + H2O = 5-methylaminomethyl-2-selenouridine(34) in tRNA + phosphate. Functionally, involved in the post-transcriptional modification of the uridine at the wobble position (U34) of tRNA(Lys), tRNA(Glu) and tRNA(Gln). Catalyzes the conversion of 2-thiouridine (S2U-RNA) to 2-selenouridine (Se2U-RNA). Acts in a two-step process involving geranylation of 2-thiouridine (S2U) to S-geranyl-2-thiouridine (geS2U) and subsequent selenation of the latter derivative to 2-selenouridine (Se2U) in the tRNA chain. The chain is tRNA 2-selenouridine synthase from Pseudomonas putida (strain ATCC 47054 / DSM 6125 / CFBP 8728 / NCIMB 11950 / KT2440).